The sequence spans 868 residues: Probable mixed-linked glucan synthase 3 (868 aa).

The interval 36–68 (ERKAAGGGGGGAKGKHWAAADKGERRAAKECGG) is disordered. The span at 53 to 68 (AAADKGERRAAKECGG) shows a compositional bias: basic and acidic residues. 2 consecutive transmembrane segments (helical) span residues 86–106 (LLHP…LFFG) and 116–136 (IMWF…SWLL). Residue Asp211 is part of the active site. Substrate contacts are provided by Asp412 and Asp414. The active site involves Asp573. The next 6 membrane-spanning stretches (helical) occupy residues 649–669 (IYPV…MWLI), 686–706 (LLVI…WAGI), 717–737 (FFMI…VVNL), 771–791 (MLIP…VAIG), 810–830 (MGLL…LAIM), and 838–858 (IILV…YVAT).

It belongs to the glycosyltransferase 2 family. Plant cellulose synthase-like F subfamily.

Its subcellular location is the golgi apparatus membrane. In terms of biological role, may catalyze both beta-1,3 and beta-1,4 glycosidic linkage on beta-D-glucan. Essential for (1,3;1,4)-beta-D-glucans synthesis in grasses and cereals (Poaceae). The mixed-linked glucans (which are not present in walls of dicotyledons or most other monocotyledonous plants) are particularly important constituents of the walls of the starchy endosperm and aleurone cells of cereal grains such as oats, wheat, rice and barley. They can account for up to 70% by weight of the wall. In Oryza sativa subsp. japonica (Rice), this protein is Probable mixed-linked glucan synthase 3 (CSLF3).